The primary structure comprises 723 residues: MPFSGLFSKSRSSSTRLEGWSLRNILPDSYFKCRNPSASSPSLSLNTLLAGMYASAASCFICTRGCTSGAAPPCNRAKPSLSASSLTTEAGRGFICRKTGCICNGANESAIDSLFVLQNALDCARLTGQTPYTVEVFRPIRNIFNRVREYTRASTTSVGLAWMSKYIYQYHRLMLMNLSPREPATEGWPLFLYPPPHLLVGYQYLVRTCNDYVFDTRSYSRLKYTEIHLPLQQKLNWTVMANCSYTINTGAYHRFIDFENFEETLAQVQQAVLAERVVADLALIRPMRGYGTTNMAGDRQVPVEGLLQDHYKNLSQCQNHAWGLADRMRIQNAGNKDIVILTTIRKLKTAFFNFLVSPRNPHTILSLPCDCLWLDAFMQKFTDPTLSQFQTIQSLPSQSVTKSIISALSLPGPAPCTPLSGGAFELRPRENGRAVTEEMRRRRGEMIERFIDRLPMRRRRRRAPPPPPMSEELSEPEVEAFPPASPPRRSFEEEVRDTIVEAIRLLQEELTVSARNEQFFNFAINFYEVIQRLEMLGNINELTIRRWVMYFFVAEHVATTLNYLHHNLRLYPPCSRWVDLELAQVVMRARDHEGQVVYSRVWNEMGENAFSQLMARVSGDLAATVERAGLGELEEEEMEQFMADIAYHENSGDVSEILRQVAINDTEVDSMELSFRFKVTGPVVFSQNRQIQSINRRVVALASQLRMQHRPLPAQHEQVQLPP.

Positions 453–462 match the Nuclear localization signal motif; sequence RLPMRRRRRR. The segment at 457 to 492 is disordered; the sequence is RRRRRRAPPPPPMSEELSEPEVEAFPPASPPRRSFE. Ser651 carries the post-translational modification O-(5'-phospho-DNA)-serine.

It belongs to the adenoviridae terminal protein family. Heterodimer with the polymerase; this heterodimer binds to bp 9 to 18 of the genome. Interacts with host POU2F1; POU2F1 binds to the auxiliary sequences in the inverted terminal repeats and tethers the pTP-POL heterodimer to the origin DNA thereby participating in the assembly of the pre-initiation complex (POL-TP-DBP-NFIA-POU2F1). Post-translationally, preterminal protein is used to replicate viral genome, upon genomic encapsidation it is processed first into iTP and finally into TP by adenovirus protease.

It localises to the host nucleus matrix. In terms of biological role, protein covalently bound to the viral DNA that acts as a primer for viral genomic replication by DNA strand displacement. Assembles on the viral origin of replication in an initiation complex with viral polymerase, DBP, host NFIA and host POU2F1/OCT1. During initiation, the polymerase covalently couples the first dCTP with Ser-580 of pTP. The terminal protein stimulates the template activity over 20 fold compared to protein-free templates. Neo-synthesized viral genomes are linked to two preterminal proteins, one for each 5' end. These new genomes are encapsidated in the nucleus, and during capsid maturation by viral protease, preterminal protein is first cleaved into intermediary (iTP), then into mature TP. May play a role in host nuclear matrix localization of genomic DNA. This chain is Preterminal protein, found in Canis lupus familiaris (Dog).